Here is a 216-residue protein sequence, read N- to C-terminus: uncharacterized protein (216 aa).

A run of 6 helical transmembrane segments spans residues 12 to 32 (YVLGVVFVILLPGPNSLFVLA), 48 to 68 (GVFLGDAVLMLLSALGVASLL), 74 to 94 (LFIGLKYLGAAYLFYLGVGML), 134 to 154 (ILFFISFFIQFVDPGYAYPGL), 156 to 176 (FLVLAVILELVSALYLSFLIF), and 191 to 211 (LAAGATSGVGALFVGFGVKLA).

It belongs to the Rht family.

It is found in the cell membrane. This is an uncharacterized protein from Pseudomonas aeruginosa (strain ATCC 15692 / DSM 22644 / CIP 104116 / JCM 14847 / LMG 12228 / 1C / PRS 101 / PAO1).